Here is a 328-residue protein sequence, read N- to C-terminus: Sulfate adenylyltransferase subunit 2 (328 aa).

A disordered region spans residues 305–328; sequence ERQGRVIDRDSTGSMERKKAEGYF.

The protein belongs to the PAPS reductase family. CysD subfamily. As to quaternary structure, heterodimer composed of CysD, the smaller subunit, and CysN.

The enzyme catalyses sulfate + ATP + H(+) = adenosine 5'-phosphosulfate + diphosphate. Its pathway is sulfur metabolism; hydrogen sulfide biosynthesis; sulfite from sulfate: step 1/3. In terms of biological role, with CysN forms the ATP sulfurylase (ATPS) that catalyzes the adenylation of sulfate producing adenosine 5'-phosphosulfate (APS) and diphosphate, the first enzymatic step in sulfur assimilation pathway. APS synthesis involves the formation of a high-energy phosphoric-sulfuric acid anhydride bond driven by GTP hydrolysis by CysN coupled to ATP hydrolysis by CysD. The protein is Sulfate adenylyltransferase subunit 2 of Rhodopseudomonas palustris (strain BisB18).